A 101-amino-acid polypeptide reads, in one-letter code: uncharacterized protein (101 aa).

The next 3 helical transmembrane spans lie at 10-32, 45-67, and 77-99; these read FLPN…FFLY, LGIW…LPLI, and IAFT…ILSH.

It is found in the cell membrane. This is an uncharacterized protein from Bacillus subtilis (strain 168).